A 117-amino-acid polypeptide reads, in one-letter code: UPF0642 protein C32H8.05 (117 aa).

A disordered region spans residues 39–117 (DQVNDLTKSS…SNFSKFLKKK (79 aa)). Over residues 93-106 (KWAKKHLKKGKRAK) the composition is skewed to basic residues. Positions 107 to 117 (NSNFSKFLKKK) are enriched in low complexity.

The protein belongs to the UPF0642 family.

It localises to the nucleus. The protein localises to the nucleolus. The sequence is that of UPF0642 protein C32H8.05 from Schizosaccharomyces pombe (strain 972 / ATCC 24843) (Fission yeast).